The chain runs to 318 residues: tRNA wybutosine-synthesizing protein 5 (318 aa).

Tyrosine 109 serves as a coordination point for 2-oxoglutarate. The 145-residue stretch at 126–270 (KQFPVLAEDV…YDKSDTYGNK (145 aa)) folds into the JmjC domain. Positions 163 and 165 each coordinate Fe cation. Asparagine 169 and lysine 178 together coordinate 2-oxoglutarate. Histidine 238 is a Fe cation binding site.

The protein belongs to the TYW5 family. As to quaternary structure, homodimer. The cofactor is Fe(2+).

It catalyses the reaction 7-[(3S)-3-amino-3-carboxypropyl]wyosine(37) in tRNA(Phe) + 2-oxoglutarate + O2 = 7-(2-hydroxy-3-amino-3-carboxypropyl)wyosine(37) in tRNA(Phe) + succinate + CO2. It functions in the pathway tRNA modification; wybutosine-tRNA(Phe) biosynthesis. In terms of biological role, tRNA hydroxylase that acts as a component of the wybutosine biosynthesis pathway. Wybutosine is a hyper modified guanosine with a tricyclic base found at the 3'-position adjacent to the anticodon of eukaryotic phenylalanine tRNA. Catalyzes the hydroxylation of 7-(a-amino-a-carboxypropyl)wyosine (yW-72) into undermodified hydroxywybutosine (OHyW*). OHyW* being further transformed into hydroxywybutosine (OHyW) by LCMT2/TYW4. OHyW is a derivative of wybutosine found in higher eukaryotes. The sequence is that of tRNA wybutosine-synthesizing protein 5 (TYW5) from Gallus gallus (Chicken).